The chain runs to 441 residues: Methionine gamma-lyase (441 aa).

Positions 1-25 (MAHFLETQEPLVFSGKKRNDRDDED) are disordered. At K248 the chain carries N6-(pyridoxal phosphate)lysine.

This sequence belongs to the trans-sulfuration enzymes family. In terms of assembly, homotetramer. The cofactor is pyridoxal 5'-phosphate. In terms of tissue distribution, expressed in roots, stems, siliques, leaves, flowers and seeds after imbibition (at protein level). Transcripts accumulate in dry mature seeds, but at protein level, only present upon imbibition.

The protein localises to the cytoplasm. It carries out the reaction L-methionine + H2O = methanethiol + 2-oxobutanoate + NH4(+). Its function is as follows. Catalyzes the degradation of L-methionine to alpha-ketobutyrate, methanethiol and ammonia. Exhibits a high activity toward L-methionine, L-ethionine, L-homocysteine and seleno-L-methionine, but not L-cysteine. Involved in an alternative cysteine biosynthesis pathway to the reverse trans-sulfuration pathway (methionine-&gt;homocysteine-&gt;cystathionine-&gt;cysteine) in which methanethiol is an intermediate. Also mediates an alternative isoleucine biosynthesis pathway in which 2-ketobutyrate is an intermediate. The chain is Methionine gamma-lyase (MGL) from Arabidopsis thaliana (Mouse-ear cress).